The sequence spans 479 residues: Ribulose bisphosphate carboxylase large chain (479 aa).

Positions 1–2 (MS) are excised as a propeptide. Substrate is bound by residues N123 and T173. Residue K175 is the Proton acceptor of the active site. K177 serves as a coordination point for substrate. Positions 201, 203, and 204 each coordinate Mg(2+). K201 is modified (N6-carboxylysine). S208 is subject to Phosphoserine. Residue H294 is the Proton acceptor of the active site. R295 and H327 together coordinate substrate. T330 is subject to Phosphothreonine. S379 lines the substrate pocket.

The protein belongs to the RuBisCO large chain family. Type I subfamily. In terms of assembly, heterohexadecamer of 8 large chains and 8 small chains; disulfide-linked. The disulfide link is formed within the large subunit homodimers. Mg(2+) serves as cofactor. In terms of processing, the disulfide bond which can form in the large chain dimeric partners within the hexadecamer appears to be associated with oxidative stress and protein turnover.

Its subcellular location is the plastid. It localises to the chloroplast. It catalyses the reaction 2 (2R)-3-phosphoglycerate + 2 H(+) = D-ribulose 1,5-bisphosphate + CO2 + H2O. The enzyme catalyses D-ribulose 1,5-bisphosphate + O2 = 2-phosphoglycolate + (2R)-3-phosphoglycerate + 2 H(+). Functionally, ruBisCO catalyzes two reactions: the carboxylation of D-ribulose 1,5-bisphosphate, the primary event in carbon dioxide fixation, as well as the oxidative fragmentation of the pentose substrate in the photorespiration process. Both reactions occur simultaneously and in competition at the same active site. In Capsella bursa-pastoris (Shepherd's purse), this protein is Ribulose bisphosphate carboxylase large chain.